Reading from the N-terminus, the 732-residue chain is Prolyl tripeptidyl peptidase (732 aa).

The N-terminal stretch at 1–24 is a signal peptide; it reads MKKTIFQQLFLSVCALTVALPCSA. Catalysis depends on charge relay system residues S603, D678, and H710.

Belongs to the peptidase S9B family. The N-terminus is blocked.

The enzyme catalyses Hydrolysis of Xaa-Xaa-Pro-|-Yaa- releasing the N-terminal tripeptide of a peptide with Pro as the third residue (position P1) and where Yaa is not proline.. With respect to regulation, strongly inhibited by diisopropyl fluorophosphate and Pefabloc. Weakly inhibited by 3,4-dichloroisocumarin. Not inhibited by phenylmethylsulfonyl fluoride, leupeptin, antipain or prolinal. Activated by iodoacetamide. In terms of biological role, serine proteinase. Releases tripeptides from the free amino terminus of proteins. Has a requirement for Pro in the P1 position, but is inactivated by Pro in the P1' position. The sequence is that of Prolyl tripeptidyl peptidase from Porphyromonas gingivalis (strain ATCC BAA-308 / W83).